Here is a 662-residue protein sequence, read N- to C-terminus: Putative cysteine-rich receptor-like protein kinase 16 (662 aa).

The first 26 residues, 1 to 26, serve as a signal peptide directing secretion; that stretch reads MIFIMKLKNLLPIFCFFLVSFSISSA. 2 Gnk2-homologous domains span residues 27–131 and 137–244; these read QKCG…NRSF and MTPF…LYQF. The Extracellular portion of the chain corresponds to 27-277; that stretch reads QKCGKTGLFK…DDGGKISTRN (251 aa). Asn-55, Asn-64, Asn-106, Asn-128, Asn-145, Asn-152, and Asn-206 each carry an N-linked (GlcNAc...) asparagine glycan. Residues 278–298 traverse the membrane as a helical segment; sequence ILGITVALAFFITVLLVLGYA. The Cytoplasmic segment spans residues 299 to 662; it reads LSRRRKAYQE…DASITSVDLR (364 aa). In terms of domain architecture, Protein kinase spans 335-612; it reads FQKSNKLGHG…VFQMLTNTFL (278 aa). ATP contacts are provided by residues 341-349 and Lys-363; that span reads LGHGGFGEV. The Proton acceptor role is filled by Asp-460.

Belongs to the protein kinase superfamily. Ser/Thr protein kinase family. CRK subfamily.

It localises to the membrane. It catalyses the reaction L-seryl-[protein] + ATP = O-phospho-L-seryl-[protein] + ADP + H(+). The catalysed reaction is L-threonyl-[protein] + ATP = O-phospho-L-threonyl-[protein] + ADP + H(+). The chain is Putative cysteine-rich receptor-like protein kinase 16 (CRK16) from Arabidopsis thaliana (Mouse-ear cress).